The primary structure comprises 274 residues: 3-deoxy-manno-octulosonate cytidylyltransferase (274 aa).

It belongs to the KdsB family.

The protein localises to the cytoplasm. It carries out the reaction 3-deoxy-alpha-D-manno-oct-2-ulosonate + CTP = CMP-3-deoxy-beta-D-manno-octulosonate + diphosphate. It participates in nucleotide-sugar biosynthesis; CMP-3-deoxy-D-manno-octulosonate biosynthesis; CMP-3-deoxy-D-manno-octulosonate from 3-deoxy-D-manno-octulosonate and CTP: step 1/1. Its pathway is bacterial outer membrane biogenesis; lipopolysaccharide biosynthesis. Functionally, activates KDO (a required 8-carbon sugar) for incorporation into bacterial lipopolysaccharide in Gram-negative bacteria. This chain is 3-deoxy-manno-octulosonate cytidylyltransferase, found in Bordetella avium (strain 197N).